The chain runs to 1295 residues: Phosphoribosylformylglycinamidine synthase (1295 aa).

The segment at 302–327 (APFSGAATGSGGEIRDEGATGRGSKP) is disordered. Residues 306 to 317 (GAATGSGGEIRD) and Ala677 each bind ATP. Positions 678, 717, 721, and 884 each coordinate Mg(2+). Residue Ser886 participates in ATP binding. One can recognise a Glutamine amidotransferase type-1 domain in the interval 1042–1295 (MAILREQGVN…MFRNARVYLG (254 aa)). Catalysis depends on Cys1135, which acts as the Nucleophile. Active-site residues include His1260 and Glu1262.

This sequence in the N-terminal section; belongs to the FGAMS family. In terms of assembly, monomer.

It is found in the cytoplasm. The catalysed reaction is N(2)-formyl-N(1)-(5-phospho-beta-D-ribosyl)glycinamide + L-glutamine + ATP + H2O = 2-formamido-N(1)-(5-O-phospho-beta-D-ribosyl)acetamidine + L-glutamate + ADP + phosphate + H(+). Its pathway is purine metabolism; IMP biosynthesis via de novo pathway; 5-amino-1-(5-phospho-D-ribosyl)imidazole from N(2)-formyl-N(1)-(5-phospho-D-ribosyl)glycinamide: step 1/2. In terms of biological role, phosphoribosylformylglycinamidine synthase involved in the purines biosynthetic pathway. Catalyzes the ATP-dependent conversion of formylglycinamide ribonucleotide (FGAR) and glutamine to yield formylglycinamidine ribonucleotide (FGAM) and glutamate. This Pseudoalteromonas atlantica (strain T6c / ATCC BAA-1087) protein is Phosphoribosylformylglycinamidine synthase.